The sequence spans 355 residues: S-adenosylmethionine:tRNA ribosyltransferase-isomerase (355 aa).

Belongs to the QueA family. In terms of assembly, monomer.

It localises to the cytoplasm. It carries out the reaction 7-aminomethyl-7-carbaguanosine(34) in tRNA + S-adenosyl-L-methionine = epoxyqueuosine(34) in tRNA + adenine + L-methionine + 2 H(+). It participates in tRNA modification; tRNA-queuosine biosynthesis. Transfers and isomerizes the ribose moiety from AdoMet to the 7-aminomethyl group of 7-deazaguanine (preQ1-tRNA) to give epoxyqueuosine (oQ-tRNA). The polypeptide is S-adenosylmethionine:tRNA ribosyltransferase-isomerase (Gluconacetobacter diazotrophicus (strain ATCC 49037 / DSM 5601 / CCUG 37298 / CIP 103539 / LMG 7603 / PAl5)).